Reading from the N-terminus, the 402-residue chain is NADH-quinone oxidoreductase subunit D 2 (402 aa).

The protein belongs to the complex I 49 kDa subunit family. NDH-1 is composed of 14 different subunits. Subunits NuoB, C, D, E, F, and G constitute the peripheral sector of the complex.

It is found in the cell inner membrane. The enzyme catalyses a quinone + NADH + 5 H(+)(in) = a quinol + NAD(+) + 4 H(+)(out). In terms of biological role, NDH-1 shuttles electrons from NADH, via FMN and iron-sulfur (Fe-S) centers, to quinones in the respiratory chain. The immediate electron acceptor for the enzyme in this species is believed to be ubiquinone. Couples the redox reaction to proton translocation (for every two electrons transferred, four hydrogen ions are translocated across the cytoplasmic membrane), and thus conserves the redox energy in a proton gradient. The sequence is that of NADH-quinone oxidoreductase subunit D 2 from Nitrobacter hamburgensis (strain DSM 10229 / NCIMB 13809 / X14).